We begin with the raw amino-acid sequence, 318 residues long: Ankyrin repeat and SOCS box protein 7 (318 aa).

7 ANK repeats span residues Gln13–Gly42, Asn46–Val75, Gly80–Ile109, Asp116–Pro145, Lys149–Ile178, Asn180–Leu208, and Asp213–Thr242. Positions Leu265–Ile318 constitute an SOCS box domain.

It belongs to the ankyrin SOCS box (ASB) family. Interacts with CUL5. Interacts with RNF7. Interacts with PSRC1.

The protein localises to the nucleus. It is found in the cytoplasm. It participates in protein modification; protein ubiquitination. Probable substrate-recognition component of a SCF-like ECS (Elongin-Cullin-SOCS-box protein) E3 ubiquitin-protein ligase complex which mediates the ubiquitination and subsequent proteasomal degradation of target proteins. Plays a role in spindle dynamics and genome integrity by targeting the mitotic progression protein PSRC1 for proteasomal degradation in a cell cycle-dependent manner. Also participates in meiosis by mediating the proper attachment between kinetochores and microtubules. In Mus musculus (Mouse), this protein is Ankyrin repeat and SOCS box protein 7 (Asb7).